A 260-amino-acid polypeptide reads, in one-letter code: Adenosylcobinamide-GDP ribazoletransferase (260 aa).

The next 6 helical transmembrane spans lie at 43–63, 64–84, 117–137, 143–163, 197–217, and 237–257; these read LVGTLVGLIAALVFYLTQFIF, PASVAVVLAMIATVLLTGGFH, GSLALMLALLLKFQLLSELAL, VAGGLVLGHTLSRAFAASIIF, VICLLLTGVGATLVILVTLFV, and TLGACQQILELVVYLVLLLLW.

This sequence belongs to the CobS family. Mg(2+) is required as a cofactor.

The protein resides in the cell inner membrane. The catalysed reaction is alpha-ribazole + adenosylcob(III)inamide-GDP = adenosylcob(III)alamin + GMP + H(+). It carries out the reaction alpha-ribazole 5'-phosphate + adenosylcob(III)inamide-GDP = adenosylcob(III)alamin 5'-phosphate + GMP + H(+). It participates in cofactor biosynthesis; adenosylcobalamin biosynthesis; adenosylcobalamin from cob(II)yrinate a,c-diamide: step 7/7. Its function is as follows. Joins adenosylcobinamide-GDP and alpha-ribazole to generate adenosylcobalamin (Ado-cobalamin). Also synthesizes adenosylcobalamin 5'-phosphate from adenosylcobinamide-GDP and alpha-ribazole 5'-phosphate. This Shewanella amazonensis (strain ATCC BAA-1098 / SB2B) protein is Adenosylcobinamide-GDP ribazoletransferase.